Here is a 618-residue protein sequence, read N- to C-terminus: Two-component response regulator-like APRR1 (618 aa).

The region spanning 20–138 is the Response regulatory domain; sequence RILLCDNDST…ELLNLWTHMW (119 aa). Polar residues-rich tracts occupy residues 161–174, 187–200, 246–257, 324–334, and 375–389; these read SDQSDPNTNSTNLF, NPQRGNLSHQENEW, RNSNPAQFSSAP, PKSTVLRTNGQ, and TEQYHSQGETLQNGA. Disordered regions lie at residues 161–200, 239–260, 316–338, 368–395, and 573–618; these read SDQSDPNTNSTNLFSDDTDDRSLRSTNPQRGNLSHQENEW, SHHEPMKRNSNPAQFSSAPKKS, TKQARRATPKSTVLRTNGQDPPL, QAHRSRGTEQYHSQGETLQNGASYPHSL, and VRKM…ALGT. A CCT domain is found at 533–575; sequence REEALLKFRRKRNQRCFDKKIRYVNRKRLAERRPRVKGQFVRK. A coiled-coil region spans residues 588-610; that stretch reads DSADYDDEEEEEEEEEEENRDSS. Positions 590 to 606 are enriched in acidic residues; sequence ADYDDEEEEEEEEEEEN.

The protein belongs to the ARR-like family. Interacts with PIF1, PIL2, PIF3, PIF4, PIL5, PIL6, ABI3 (via C-terminus), ADO1/ZTL, ADO2, APRR3 and TCP21/CHE. Both the phosphorylated and the dephosphorylated forms interact with ADO1/ZLT. In terms of processing, phosphorylated; during the day. Phosphorylation is required for optimal interaction with APRR3. As to expression, expressed in leaves, flowers and siliques. Restricted to the vasculature.

It is found in the nucleus. Controls photoperiodic flowering response. Component of the circadian clock. Expression of several members of the ARR-like family is controlled by circadian rhythm. The particular coordinated sequential expression of APRR9, APRR7, APRR5, APRR3 and APPR1 result to circadian waves that may be at the basis of the endogenous circadian clock. Positive regulator of CCA1 and LHY expression. In Arabidopsis thaliana (Mouse-ear cress), this protein is Two-component response regulator-like APRR1 (APRR1).